Here is a 416-residue protein sequence, read N- to C-terminus: UDP-N-acetylglucosamine 1-carboxyvinyltransferase (416 aa).

22-23 (KN) is a phosphoenolpyruvate binding site. Residue Arg91 participates in UDP-N-acetyl-alpha-D-glucosamine binding. The Proton donor role is filled by Cys115. The residue at position 115 (Cys115) is a 2-(S-cysteinyl)pyruvic acid O-phosphothioketal. UDP-N-acetyl-alpha-D-glucosamine contacts are provided by residues 120–124 (RPIDL), Asp305, and Ile327.

This sequence belongs to the EPSP synthase family. MurA subfamily.

It localises to the cytoplasm. It carries out the reaction phosphoenolpyruvate + UDP-N-acetyl-alpha-D-glucosamine = UDP-N-acetyl-3-O-(1-carboxyvinyl)-alpha-D-glucosamine + phosphate. It functions in the pathway cell wall biogenesis; peptidoglycan biosynthesis. In terms of biological role, cell wall formation. Adds enolpyruvyl to UDP-N-acetylglucosamine. The sequence is that of UDP-N-acetylglucosamine 1-carboxyvinyltransferase from Buchnera aphidicola subsp. Acyrthosiphon pisum (strain 5A).